The following is a 142-amino-acid chain: Putative pre-16S rRNA nuclease (142 aa).

Belongs to the YqgF nuclease family.

It is found in the cytoplasm. Its function is as follows. Could be a nuclease involved in processing of the 5'-end of pre-16S rRNA. The protein is Putative pre-16S rRNA nuclease of Lactobacillus delbrueckii subsp. bulgaricus (strain ATCC 11842 / DSM 20081 / BCRC 10696 / JCM 1002 / NBRC 13953 / NCIMB 11778 / NCTC 12712 / WDCM 00102 / Lb 14).